A 323-amino-acid polypeptide reads, in one-letter code: NADH-cytochrome b5 reductase 2 (323 aa).

Residues 32-48 traverse the membrane as a helical segment; that stretch reads LAPIYLGVGLIGLGVGL. Positions 72-177 constitute an FAD-binding FR-type domain; sequence QGWVDLKLAQ…KGPIPKYPWE (106 aa). 180-215 lines the FAD pocket; that stretch reads KHKHICLIAGGTGITPMYQLARKIFKDPEDQTKVTL.

It belongs to the flavoprotein pyridine nucleotide cytochrome reductase family. It depends on FAD as a cofactor.

The protein resides in the mitochondrion outer membrane. The catalysed reaction is 2 Fe(III)-[cytochrome b5] + NADH = 2 Fe(II)-[cytochrome b5] + NAD(+) + H(+). Its function is as follows. May mediate the reduction of outer membrane cytochrome b5. This Aspergillus fumigatus (strain ATCC MYA-4609 / CBS 101355 / FGSC A1100 / Af293) (Neosartorya fumigata) protein is NADH-cytochrome b5 reductase 2 (mcr1).